A 517-amino-acid chain; its full sequence is GTPase Obg (517 aa).

Residues 2 to 159 (ATFVDTVTLH…GDVVLELKVV (158 aa)) form the Obg domain. Residues 160–336 (ADVALVGYPS…LSFALAELVK (177 aa)) enclose the OBG-type G domain. Residues 166-173 (GYPSAGKS), 191-195 (FTTLH), 212-215 (DVPG), 288-291 (NKID), and 317-319 (STV) each bind GTP. 2 residues coordinate Mg(2+): Ser173 and Thr193. Positions 355-439 (PRAVDEKPFT…GDGVVFDWEP (85 aa)) constitute an OCT domain. The disordered stretch occupies residues 490–517 (EGEAGLWADEDGTGQDGTDEDATTDAKA). Residues 497-517 (ADEDGTGQDGTDEDATTDAKA) show a composition bias toward acidic residues.

It belongs to the TRAFAC class OBG-HflX-like GTPase superfamily. OBG GTPase family. In terms of assembly, monomer. Requires Mg(2+) as cofactor.

The protein localises to the cytoplasm. In terms of biological role, an essential GTPase which binds GTP, GDP and possibly (p)ppGpp with moderate affinity, with high nucleotide exchange rates and a fairly low GTP hydrolysis rate. Plays a role in control of the cell cycle, stress response, ribosome biogenesis and in those bacteria that undergo differentiation, in morphogenesis control. In Clavibacter sepedonicus (Clavibacter michiganensis subsp. sepedonicus), this protein is GTPase Obg.